A 146-amino-acid polypeptide reads, in one-letter code: Leptin (146 aa).

The cysteines at positions 96 and 146 are disulfide-linked.

This sequence belongs to the leptin family.

The protein resides in the secreted. In terms of biological role, key player in the regulation of energy balance and body weight control. Once released into the circulation, has central and peripheral effects by binding LEPR, found in many tissues, which results in the activation of several major signaling pathways. In the hypothalamus, acts as an appetite-regulating factor that induces a decrease in food intake and an increase in energy consumption by inducing anorexinogenic factors and suppressing orexigenic neuropeptides, also regulates bone mass and secretion of hypothalamo-pituitary-adrenal hormones. In the periphery, increases basal metabolism, influences reproductive function, regulates pancreatic beta-cell function and insulin secretion, is pro-angiogenic for endothelial cell and affects innate and adaptive immunity. In the arcuate nucleus of the hypothalamus, activates by depolarization POMC neurons inducing FOS and SOCS3 expression to release anorexigenic peptides and inhibits by hyperpolarization NPY neurons inducing SOCS3 with a consequent reduction on release of orexigenic peptides. In addition to its known satiety inducing effect, has a modulatory role in nutrient absorption. In the intestine, reduces glucose absorption by enterocytes by activating PKC and leading to a sequential activation of p38, PI3K and ERK signaling pathways which exerts an inhibitory effect on glucose absorption. Acts as a growth factor on certain tissues, through the activation of different signaling pathways increases expression of genes involved in cell cycle regulation such as CCND1, via JAK2-STAT3 pathway, or VEGFA, via MAPK1/3 and PI3K-AKT1 pathways. May also play an apoptotic role via JAK2-STAT3 pathway and up-regulation of BIRC5 expression. Pro-angiogenic, has mitogenic activity on vascular endothelial cells and plays a role in matrix remodeling by regulating the expression of matrix metalloproteinases (MMPs) and tissue inhibitors of metalloproteinases (TIMPs). In innate immunity, modulates the activity and function of neutrophils by increasing chemotaxis and the secretion of oxygen radicals. Increases phagocytosis by macrophages and enhances secretion of pro-inflammatory mediators. Increases cytotoxic ability of NK cells. Plays a pro-inflammatory role, in synergy with IL1B, by inducing NOS2 which promotes the production of IL6, IL8 and Prostaglandin E2, through a signaling pathway that involves JAK2, PI3K, MAP2K1/MEK1 and MAPK14/p38. In adaptive immunity, promotes the switch of memory T-cells towards T helper-1 cell immune responses. Increases CD4(+)CD25(-) T-cell proliferation and reduces autophagy during TCR (T-cell receptor) stimulation, through MTOR signaling pathway activation and BCL2 up-regulation. The chain is Leptin (LEP) from Pan troglodytes (Chimpanzee).